We begin with the raw amino-acid sequence, 939 residues long: Tyrosine-protein kinase Shark (939 aa).

The region spanning Trp10–Leu106 is the SH2 1 domain. 3 ANK repeats span residues Asp153 to Ser185, Phe186 to Ile218, and Asn220 to Ser252. Residues Trp288 to Val403 form the SH2 2 domain. 2 disordered regions span residues Glu410 to His446 and Ala476 to Gly505. Polar residues predominate over residues Glu496–Gly505. The Protein kinase domain maps to Leu662–Phe921. ATP contacts are provided by residues Ile668–Val676 and Lys698. Asp789 (proton acceptor) is an active-site residue. Phosphotyrosine is present on Tyr927.

The protein belongs to the protein kinase superfamily. Tyr protein kinase family. In terms of assembly, interacts with drpr; this is required for the recruitment of drpr and glial cells to severed axons and for the phagocytosis of axonal debris by glial cells following axon injury. As to expression, gastrulation embryos show expression in ectodermal cells along the cephalic furrow and ventral midline. Proctodeum, stomodeum and their derived structures (foregut, atrium, pharynx, esophagus and hindgut) continue to show expression from stage 8-9 to late embryos. Other ectodermally derived structures (frontal sac, salivary gland and labium) and developing tracheal system also show expression.

The protein resides in the cytoplasm. It carries out the reaction L-tyrosyl-[protein] + ATP = O-phospho-L-tyrosyl-[protein] + ADP + H(+). In terms of biological role, following axon injury, required for recruitment of drpr and glial cells to severed axons and for glial clearance of severed axons from the central nervous system. Together with Src42a and drpr, promotes the migration of macrophages to sites of wounding as part of a signaling cascade where Scr42a detects production of hydrogen peroxide at wound sites which triggers phosphorylation of drpr and subsequent recruitment and activation of shark. May be involved in signal transduction on the apical surface of ectodermal epithelial cells, regulating their polarity during invagination. Crumbs (crb) may be the intracellular signal. The chain is Tyrosine-protein kinase Shark from Drosophila melanogaster (Fruit fly).